Reading from the N-terminus, the 130-residue chain is Ribosome-binding factor A (130 aa).

Belongs to the RbfA family. Monomer. Binds 30S ribosomal subunits, but not 50S ribosomal subunits or 70S ribosomes.

The protein localises to the cytoplasm. Functionally, one of several proteins that assist in the late maturation steps of the functional core of the 30S ribosomal subunit. Associates with free 30S ribosomal subunits (but not with 30S subunits that are part of 70S ribosomes or polysomes). Required for efficient processing of 16S rRNA. May interact with the 5'-terminal helix region of 16S rRNA. This is Ribosome-binding factor A from Prochlorococcus marinus (strain MIT 9312).